We begin with the raw amino-acid sequence, 286 residues long: MEKESHEENNHTISGDLTAKRKRGRPRKQLKLESNEHSLGHSPSFSRSQQQSRQRNDDEAMVGQPISGVIEATFEAGFLLSVKVGNSDSMLRGVVFKPGHCDPVSVDNDVAPDVPMIRRNSDVMHHDGSAKRGRKSRFREKRGSGVRSRALVPVPIQPAHPTIPNNLIVPVVLQPAHLENGGERVPIDHSPMQTETGSQASGASNGKPFETLLTQVMNKGQVQHTTQSVEPESDEQALSIEPLQAIHPIHPVHMLKPMPSYGRGKMTELLQAVQENVRETHFSQGH.

The span at 1 to 10 (MEKESHEENN) shows a compositional bias: basic and acidic residues. 3 disordered regions span residues 1–60 (MEKE…DDEA), 123–146 (VMHH…GSGV), and 181–204 (GGER…SGAS). Residues 20-29 (KRKRGRPRKQ) show a composition bias toward basic residues. Residues 30–39 (LKLESNEHSL) are compositionally biased toward basic and acidic residues. Residues 131-140 (KRGRKSRFRE) are compositionally biased toward basic residues. A compositionally biased stretch (polar residues) spans 191–204 (PMQTETGSQASGAS).

As to expression, mailny observed in young seedlings and in emerging leaves.

Its function is as follows. Lineage-specific modulator of primary metabolism. Influences flowering time. The chain is Protein METABOLIC NETWORK MODULATOR 1 from Arabidopsis thaliana (Mouse-ear cress).